The following is a 134-amino-acid chain: Complexin-2 (134 aa).

The interval 1–114 is disordered; that stretch reads MDFVMKQALG…CGDEDEEDEE (114 aa). The segment covering 15–85 has biased composition (basic and acidic residues); it reads DMGKMLGGDE…EEKEAEEKAA (71 aa). Residues 29-84 adopt a coiled-coil conformation; the sequence is DAQKKEEERQEALRQQEDERKQKHIRMETEREKVRQQIRDKYGLKKKEEKEAEEKA.

It belongs to the complexin/synaphin family. Binds to the SNARE core complex containing SNAP25, VAMP2 and STX1A. Nervous system. Present in electric organ (at protein level).

It localises to the cytoplasm. The protein localises to the cytosol. Its subcellular location is the presynapse. The protein resides in the nucleus. It is found in the perikaryon. In terms of biological role, positively regulates a late step in synaptic vesicle exocytosis. In Narke japonica (Japanese sleeper ray), this protein is Complexin-2.